The primary structure comprises 229 residues: Glycine betaine/carnitine/choline transport system permease protein OpuCD (229 aa).

Residues 22-202 enclose the ABC transmembrane type-1 domain; it reads FYRHFLMSVY…LMAVIADLVM (181 aa). The next 5 helical transmembrane spans lie at 27 to 47, 55 to 74, 78 to 100, 148 to 168, and 182 to 202; these read LMSV…GILI, GWVF…AMLA, LVMG…LPII, ALVI…GGLG, and AIIL…DLVM.

The protein belongs to the binding-protein-dependent transport system permease family. CysTW subfamily. In terms of assembly, the complex is composed of two ATP-binding proteins (OpuCA), two transmembrane proteins (OpuCB and OpuCD) and a solute-binding protein (OpuCC).

It is found in the cell membrane. In terms of biological role, involved in a high affinity multicomponent binding-protein-dependent transport system for glycine betaine, carnitine and choline; probably responsible for the translocation of the substrate across the membrane. The sequence is that of Glycine betaine/carnitine/choline transport system permease protein OpuCD (opuCD) from Bacillus subtilis (strain 168).